Here is a 477-residue protein sequence, read N- to C-terminus: Transmembrane and coiled-coil domain protein 3 (477 aa).

Serine 46 is modified (phosphoserine). The stretch at 112 to 153 forms a coiled coil; it reads KQVFEKKNQKSAHSIAQLQKKLEQYHRKLREIEQNGASRSSK. Disordered regions lie at residues 168-188 and 249-277; these read KDAHVKSRTAPHCMESSKSGM and PKYGSDDECSSGTSGSADSNGNQSFGAGG. Serine 253 is modified (phosphoserine). The segment covering 258 to 273 has biased composition (polar residues); it reads SSGTSGSADSNGNQSF. Positions 282 to 398 form a coiled coil; it reads DSQGKLAVIL…KLELHQQEQQ (117 aa). 2 helical membrane passes run 417 to 437 and 450 to 470; these read VILAFMTVILVCVSTIAKFVS and FFAVTLLAIFCKNWDHILCAI.

Belongs to the TEX28 family. As to quaternary structure, may form homodimers and heterodimers with TMCC2 or TMCC3 via the coiled-coil domains. Interacts with ribosomal proteins RPL4 and RPS6. In terms of tissue distribution, widely expressed, with highest levels in brain, spinal cord and testis.

The protein localises to the endoplasmic reticulum membrane. This is Transmembrane and coiled-coil domain protein 3 from Homo sapiens (Human).